Consider the following 457-residue polypeptide: Bifunctional protein GlmU (457 aa).

Residues 1–230 (MPLSLPLHIV…AQEVEGVNDL (230 aa)) form a pyrophosphorylase region. UDP-N-acetyl-alpha-D-glucosamine is bound by residues 12–15 (LAAG), lysine 26, glutamine 78, 83–84 (GT), 105–107 (YGD), glycine 140, glutamate 155, asparagine 170, and asparagine 228. Position 107 (aspartate 107) interacts with Mg(2+). Asparagine 228 lines the Mg(2+) pocket. Residues 231-251 (WQLTQLERAWQIRAARALCLQ) are linker. The N-acetyltransferase stretch occupies residues 252-457 (GARVADPARL…DGWQRPKKKT (206 aa)). The UDP-N-acetyl-alpha-D-glucosamine site is built by arginine 334 and lysine 352. Histidine 364 acts as the Proton acceptor in catalysis. The UDP-N-acetyl-alpha-D-glucosamine site is built by tyrosine 367 and asparagine 378. Residues alanine 381, 387-388 (NY), serine 406, alanine 424, and arginine 441 contribute to the acetyl-CoA site.

The protein in the N-terminal section; belongs to the N-acetylglucosamine-1-phosphate uridyltransferase family. In the C-terminal section; belongs to the transferase hexapeptide repeat family. As to quaternary structure, homotrimer. Requires Mg(2+) as cofactor.

It is found in the cytoplasm. It carries out the reaction alpha-D-glucosamine 1-phosphate + acetyl-CoA = N-acetyl-alpha-D-glucosamine 1-phosphate + CoA + H(+). The catalysed reaction is N-acetyl-alpha-D-glucosamine 1-phosphate + UTP + H(+) = UDP-N-acetyl-alpha-D-glucosamine + diphosphate. The protein operates within nucleotide-sugar biosynthesis; UDP-N-acetyl-alpha-D-glucosamine biosynthesis; N-acetyl-alpha-D-glucosamine 1-phosphate from alpha-D-glucosamine 6-phosphate (route II): step 2/2. It participates in nucleotide-sugar biosynthesis; UDP-N-acetyl-alpha-D-glucosamine biosynthesis; UDP-N-acetyl-alpha-D-glucosamine from N-acetyl-alpha-D-glucosamine 1-phosphate: step 1/1. It functions in the pathway bacterial outer membrane biogenesis; LPS lipid A biosynthesis. Its function is as follows. Catalyzes the last two sequential reactions in the de novo biosynthetic pathway for UDP-N-acetylglucosamine (UDP-GlcNAc). The C-terminal domain catalyzes the transfer of acetyl group from acetyl coenzyme A to glucosamine-1-phosphate (GlcN-1-P) to produce N-acetylglucosamine-1-phosphate (GlcNAc-1-P), which is converted into UDP-GlcNAc by the transfer of uridine 5-monophosphate (from uridine 5-triphosphate), a reaction catalyzed by the N-terminal domain. This chain is Bifunctional protein GlmU, found in Xylella fastidiosa (strain M23).